Consider the following 163-residue polypeptide: 2-C-methyl-D-erythritol 2,4-cyclodiphosphate synthase (163 aa).

Residues Asp-8 and His-10 each contribute to the a divalent metal cation site. Residues 8-10 (DVH) and 34-35 (HS) each bind 4-CDP-2-C-methyl-D-erythritol 2-phosphate. His-42 serves as a coordination point for a divalent metal cation. 4-CDP-2-C-methyl-D-erythritol 2-phosphate is bound by residues 56 to 58 (DIG), 132 to 135 (TTTE), Phe-139, and Arg-142.

This sequence belongs to the IspF family. In terms of assembly, homotrimer. The cofactor is a divalent metal cation.

It catalyses the reaction 4-CDP-2-C-methyl-D-erythritol 2-phosphate = 2-C-methyl-D-erythritol 2,4-cyclic diphosphate + CMP. Its pathway is isoprenoid biosynthesis; isopentenyl diphosphate biosynthesis via DXP pathway; isopentenyl diphosphate from 1-deoxy-D-xylulose 5-phosphate: step 4/6. Its function is as follows. Involved in the biosynthesis of isopentenyl diphosphate (IPP) and dimethylallyl diphosphate (DMAPP), two major building blocks of isoprenoid compounds. Catalyzes the conversion of 4-diphosphocytidyl-2-C-methyl-D-erythritol 2-phosphate (CDP-ME2P) to 2-C-methyl-D-erythritol 2,4-cyclodiphosphate (ME-CPP) with a corresponding release of cytidine 5-monophosphate (CMP). The chain is 2-C-methyl-D-erythritol 2,4-cyclodiphosphate synthase from Moorella thermoacetica (strain ATCC 39073 / JCM 9320).